We begin with the raw amino-acid sequence, 396 residues long: Purine ribonucleoside efflux pump NepI (396 aa).

The Cytoplasmic segment spans residues 1–21 (MSEFIAENRGADAITRPNWSA). A helical membrane pass occupies residues 22 to 42 (VFSVAFCVACLIIVEFLPVSL). The Periplasmic portion of the chain corresponds to 43–54 (LTPMAQDLGISE). The helical transmembrane segment at 55-75 (GVAGQSVTVTAFVAMFASLFI) threads the bilayer. At 76–85 (TQTIQATDRR) the chain is on the cytoplasmic side. A helical membrane pass occupies residues 86 to 106 (YVVILFAVLLTLSCLLVSFAN). A topological domain (periplasmic) is located at residue serine 107. A helical membrane pass occupies residues 108-128 (FSLLLIGRACLGLALGGFWAM). Residues 129 to 147 (SASLTMRLVPPRTVPKALS) lie on the Cytoplasmic side of the membrane. A helical membrane pass occupies residues 148-168 (VIFGAVSIALVIAAPLGSFLG). The Periplasmic portion of the chain corresponds to 169–175 (ELIGWRN). The chain crosses the membrane as a helical span at residues 176 to 196 (VFNAAAAMGVLCIFWIIKSLP). Over 197–215 (SLPGEPSHQKQNTFRLLQR) the chain is Cytoplasmic. The chain crosses the membrane as a helical span at residues 216 to 236 (PGVMAGMIAIFMSFAGQFAFF). The Periplasmic segment spans residues 237 to 255 (TYIRPVYMNLAGFGVDGLT). Residues 256–276 (LVLLSFGIASFVGTSLSSFIL) form a helical membrane-spanning segment. Topologically, residues 277–281 (KRSVK) are cytoplasmic. A helical transmembrane segment spans residues 282–302 (LALAGAPFVLALSALVLTLWG). Over 303-305 (SDK) the chain is Periplasmic. The helical transmembrane segment at 306–326 (IVATGVAIIWGLTFALIPVGW) threads the bilayer. Topologically, residues 327–343 (STWITRSLADQAEKAGS) are cytoplasmic. The chain crosses the membrane as a helical span at residues 344-364 (IQVAVIQLANTCGAAIGGYAL). Topologically, residues 365-366 (DN) are periplasmic. A helical transmembrane segment spans residues 367–387 (IGLTSPLMLSGTLMLLTALLV). At 388-396 (TAKVKMKKS) the chain is on the cytoplasmic side.

The protein belongs to the major facilitator superfamily. DHA1 family. NepI (TC 2.A.1.2.26) subfamily.

The protein localises to the cell inner membrane. The enzyme catalyses inosine(in) + H(+)(out) = inosine(out) + H(+)(in). It carries out the reaction guanosine(in) + H(+)(out) = guanosine(out) + H(+)(in). Its function is as follows. Involved in the efflux of purine ribonucleosides, such as inosine and guanosine. In Escherichia coli O1:K1 / APEC, this protein is Purine ribonucleoside efflux pump NepI.